Consider the following 103-residue polypeptide: Large ribosomal subunit protein bL21 (103 aa).

Belongs to the bacterial ribosomal protein bL21 family. As to quaternary structure, part of the 50S ribosomal subunit. Contacts protein L20.

Functionally, this protein binds to 23S rRNA in the presence of protein L20. In Lactobacillus acidophilus (strain ATCC 700396 / NCK56 / N2 / NCFM), this protein is Large ribosomal subunit protein bL21.